Reading from the N-terminus, the 452-residue chain is Putative purine permease CPE0397 (452 aa).

Transmembrane regions (helical) follow at residues 34–54 (IFAA…SLGF), 58–78 (VTTA…IIQA), 83–103 (KVGA…SPAI), 108–128 (VLGL…EVIL), 138–158 (FFPP…LLPV), 172–192 (YASL…LLLN), 201–221 (SASI…LGLV), 250–270 (MAFI…LKAI), 326–346 (AVMA…AAII), 348–368 (GIPN…VAAA), 383–403 (LLII…PDVI), and 412–432 (MIFS…NAVL).

Belongs to the nucleobase:cation symporter-2 (NCS2) (TC 2.A.40) family.

The protein resides in the cell membrane. In Clostridium perfringens (strain 13 / Type A), this protein is Putative purine permease CPE0397 (cpx).